Consider the following 236-residue polypeptide: Adenylate dimethylallyltransferase (236 aa).

The protein belongs to the isopentenyl transferase family.

It catalyses the reaction dimethylallyl diphosphate + AMP = N(6)-(dimethylallyl)adenosine 5'-phosphate + diphosphate. Its function is as follows. Transfers dimethylallyl groups to AMP as part of the biosynthesis of cytokinin phytohormones. This Allorhizobium ampelinum (strain ATCC BAA-846 / DSM 112012 / S4) (Agrobacterium vitis (strain S4)) protein is Adenylate dimethylallyltransferase (ipt).